Reading from the N-terminus, the 396-residue chain is Elongation factor Tu (396 aa).

A tr-type G domain is found at 10 to 206 (KPHVNVGTIG…ALDTYIPTPE (197 aa)). Positions 19 to 26 (GHVDHGKT) are G1. 19-26 (GHVDHGKT) contributes to the GTP binding site. T26 is a binding site for Mg(2+). The segment at 60–64 (GITIN) is G2. A G3 region spans residues 81–84 (DCPG). GTP-binding positions include 81 to 85 (DCPGH) and 136 to 139 (NKCD). The segment at 136-139 (NKCD) is G4. Residues 174-176 (SAK) form a G5 region.

This sequence belongs to the TRAFAC class translation factor GTPase superfamily. Classic translation factor GTPase family. EF-Tu/EF-1A subfamily. In terms of assembly, monomer.

Its subcellular location is the cytoplasm. It catalyses the reaction GTP + H2O = GDP + phosphate + H(+). Its function is as follows. GTP hydrolase that promotes the GTP-dependent binding of aminoacyl-tRNA to the A-site of ribosomes during protein biosynthesis. The sequence is that of Elongation factor Tu from Paraburkholderia xenovorans (strain LB400).